A 360-amino-acid chain; its full sequence is Phenylalanine--tRNA ligase alpha subunit (360 aa).

Residue Glu-260 participates in Mg(2+) binding.

The protein belongs to the class-II aminoacyl-tRNA synthetase family. Phe-tRNA synthetase alpha subunit type 1 subfamily. Tetramer of two alpha and two beta subunits. It depends on Mg(2+) as a cofactor.

Its subcellular location is the cytoplasm. The catalysed reaction is tRNA(Phe) + L-phenylalanine + ATP = L-phenylalanyl-tRNA(Phe) + AMP + diphosphate + H(+). The polypeptide is Phenylalanine--tRNA ligase alpha subunit (Methylobacterium sp. (strain 4-46)).